The chain runs to 285 residues: Putative sugar uptake protein lin0444 (285 aa).

Helical transmembrane passes span 2–21, 31–50, 55–77, 111–133, 146–168, 172–194, 207–229, 233–255, and 262–284; these read SIYLIALLPVLGWGFMPIIA, QLLGTSISALLFAFILFWIL, TVLSFIVSFVSGIFWSFGQLLQF, WQTVTAVIIGVVAVILILIGVVM, SVSFHVYGIVILSSFFLTLYVVT, FDVTGFSIILPQAIGMLTCAIGI, VTFNLMTGLSWSIANLGMFLATA, VATSFSISQACVIVATIGGILIF, and LEWTFILSGILLIMVGVVFLSLL.

It belongs to the GRP transporter (TC 2.A.7.5) family.

It localises to the cell membrane. In Listeria innocua serovar 6a (strain ATCC BAA-680 / CLIP 11262), this protein is Putative sugar uptake protein lin0444.